Consider the following 258-residue polypeptide: Imidazole glycerol phosphate synthase subunit HisF (258 aa).

Catalysis depends on residues aspartate 12 and aspartate 131.

This sequence belongs to the HisA/HisF family. As to quaternary structure, heterodimer of HisH and HisF.

The protein resides in the cytoplasm. It catalyses the reaction 5-[(5-phospho-1-deoxy-D-ribulos-1-ylimino)methylamino]-1-(5-phospho-beta-D-ribosyl)imidazole-4-carboxamide + L-glutamine = D-erythro-1-(imidazol-4-yl)glycerol 3-phosphate + 5-amino-1-(5-phospho-beta-D-ribosyl)imidazole-4-carboxamide + L-glutamate + H(+). Its pathway is amino-acid biosynthesis; L-histidine biosynthesis; L-histidine from 5-phospho-alpha-D-ribose 1-diphosphate: step 5/9. Its function is as follows. IGPS catalyzes the conversion of PRFAR and glutamine to IGP, AICAR and glutamate. The HisF subunit catalyzes the cyclization activity that produces IGP and AICAR from PRFAR using the ammonia provided by the HisH subunit. The protein is Imidazole glycerol phosphate synthase subunit HisF of Corynebacterium diphtheriae (strain ATCC 700971 / NCTC 13129 / Biotype gravis).